A 212-amino-acid chain; its full sequence is ATP phosphoribosyltransferase (212 aa).

Belongs to the ATP phosphoribosyltransferase family. Short subfamily. Heteromultimer composed of HisG and HisZ subunits.

It localises to the cytoplasm. The enzyme catalyses 1-(5-phospho-beta-D-ribosyl)-ATP + diphosphate = 5-phospho-alpha-D-ribose 1-diphosphate + ATP. It participates in amino-acid biosynthesis; L-histidine biosynthesis; L-histidine from 5-phospho-alpha-D-ribose 1-diphosphate: step 1/9. Functionally, catalyzes the condensation of ATP and 5-phosphoribose 1-diphosphate to form N'-(5'-phosphoribosyl)-ATP (PR-ATP). Has a crucial role in the pathway because the rate of histidine biosynthesis seems to be controlled primarily by regulation of HisG enzymatic activity. This Halalkalibacterium halodurans (strain ATCC BAA-125 / DSM 18197 / FERM 7344 / JCM 9153 / C-125) (Bacillus halodurans) protein is ATP phosphoribosyltransferase (hisG).